The primary structure comprises 271 residues: Bis(5'-nucleosyl)-tetraphosphatase, symmetrical (271 aa).

This sequence belongs to the Ap4A hydrolase family.

It carries out the reaction P(1),P(4)-bis(5'-adenosyl) tetraphosphate + H2O = 2 ADP + 2 H(+). In terms of biological role, hydrolyzes diadenosine 5',5'''-P1,P4-tetraphosphate to yield ADP. The chain is Bis(5'-nucleosyl)-tetraphosphatase, symmetrical from Aliivibrio fischeri (strain MJ11) (Vibrio fischeri).